Here is a 514-residue protein sequence, read N- to C-terminus: 2,3-bisphosphoglycerate-independent phosphoglycerate mutase (514 aa).

Mn(2+)-binding residues include aspartate 14 and serine 64. The active-site Phosphoserine intermediate is the serine 64. Substrate is bound by residues histidine 125, 155-156 (RD), arginine 187, arginine 193, 263-266 (RADR), and lysine 336. Positions 403, 407, 444, 445, and 463 each coordinate Mn(2+).

It belongs to the BPG-independent phosphoglycerate mutase family. Monomer. Mn(2+) serves as cofactor.

It catalyses the reaction (2R)-2-phosphoglycerate = (2R)-3-phosphoglycerate. The protein operates within carbohydrate degradation; glycolysis; pyruvate from D-glyceraldehyde 3-phosphate: step 3/5. Functionally, catalyzes the interconversion of 2-phosphoglycerate and 3-phosphoglycerate. This is 2,3-bisphosphoglycerate-independent phosphoglycerate mutase from Shewanella sp. (strain W3-18-1).